Consider the following 295-residue polypeptide: Iodotyrosine deiodinase (295 aa).

The helical transmembrane segment at 3 to 23 threads the bilayer; the sequence is VFSSLTPVFVAVLCVIIGFLF. The interval 29–81 is disordered; it reads KESRSKQKPSDQTARPWVDEDLQDDTEISTKDNEENNEDWMDTTDEENLPHVP. Residues 63–75 show a composition bias toward acidic residues; that stretch reads ENNEDWMDTTDEE. Residues 106–110, Ser-134, and 134–135 each bind FMN; these read RRSVR and SG. 3-iodo-L-tyrosine contacts are provided by Ala-136, Glu-163, Tyr-167, and Lys-188. FMN-binding positions include 243 to 245 and Arg-285; that span reads TTT.

Belongs to the nitroreductase family. The cofactor is FMN.

Its subcellular location is the membrane. It catalyses the reaction 2 iodide + L-tyrosine + 2 NADP(+) = 3,5-diiodo-L-tyrosine + 2 NADPH + H(+). The catalysed reaction is iodide + L-tyrosine + NADP(+) = 3-iodo-L-tyrosine + NADPH. It carries out the reaction 3-iodo-L-tyrosine + iodide + NADP(+) = 3,5-diiodo-L-tyrosine + NADPH + H(+). The enzyme catalyses L-tyrosine + chloride + NADP(+) = 3-chloro-L-tyrosine + NADPH. It catalyses the reaction bromide + L-tyrosine + NADP(+) = 3-bromo-L-tyrosine + NADPH. Functionally, catalyzes the dehalogenation of halotyrosines such as 3,5-diiodo-L-tyrosine. Likely to also catalyze the dehalogenation of other halotyrosines such as 3-bromo-L-tyrosine, 3-chloro-L-tyrosine and 3-iodo-L-tyrosine. This chain is Iodotyrosine deiodinase (iyd), found in Danio rerio (Zebrafish).